A 503-amino-acid chain; its full sequence is 2-isopropylmalate synthase (503 aa).

Asp-1, His-189, His-191, and Asn-225 together coordinate Mn(2+). Residues 1–254 (DGEQALQASL…STNINHKEIY (254 aa)) form the Pyruvate carboxyltransferase domain. Positions 379 to 503 (SLKFFSVQSI…NKNLKNLKKQ (125 aa)) are regulatory domain.

This sequence belongs to the alpha-IPM synthase/homocitrate synthase family. LeuA type 1 subfamily. Homodimer. The cofactor is Mn(2+).

It localises to the cytoplasm. The catalysed reaction is 3-methyl-2-oxobutanoate + acetyl-CoA + H2O = (2S)-2-isopropylmalate + CoA + H(+). The protein operates within amino-acid biosynthesis; L-leucine biosynthesis; L-leucine from 3-methyl-2-oxobutanoate: step 1/4. Functionally, catalyzes the condensation of the acetyl group of acetyl-CoA with 3-methyl-2-oxobutanoate (2-ketoisovalerate) to form 3-carboxy-3-hydroxy-4-methylpentanoate (2-isopropylmalate). The sequence is that of 2-isopropylmalate synthase from Buchnera aphidicola subsp. Uroleucon ambrosiae.